Consider the following 298-residue polypeptide: DDRGK domain-containing protein 1 (298 aa).

A helical transmembrane segment spans residues 1-21; sequence MDIVLYFVAVPILIVLIVSAV. The Cytoplasmic portion of the chain corresponds to 22-298; the sequence is KVRGKTEEDN…NLIPEIHNTA (277 aa). Positions 71–149 are disordered; the sequence is NSAYREAADN…EERRKEDKKE (79 aa). A compositionally biased stretch (acidic residues) spans 82–94; the sequence is SPVEVEEEYEEAE. Residues 110-149 show a composition bias toward basic and acidic residues; that stretch reads KLEEKQAKRAQREAELEEREERKRTQELREEERRKEDKKE. Positions 181–195 match the UFM1-interacting motif (UFIM) motif; it reads SFVVEEQGEADELTE. In terms of domain architecture, PCI spans 215–259; it reads VLLEDLASHFGLRTQDAISRLQDLLSDGSITGVIDDRGKFIFITP.

It belongs to the DDRGK1 family. As to quaternary structure, component of the UFM1 ribosome E3 ligase (UREL) complex, composed of ufl1, ddrgk1 and cdk5rap3.

The protein localises to the endoplasmic reticulum membrane. Component of the UFM1 ribosome E3 ligase (UREL) complex, a multiprotein complex that catalyzes ufmylation of endoplasmic reticulum-docked proteins. The UREL complex plays a key role in ribosome recycling by mediating mono-ufmylation of the RPL26/uL24 subunit of the 60S ribosome following ribosome dissociation: ufmylation weakens the junction between post-termination 60S subunits and SEC61 translocons, promoting release and recycling of the large ribosomal subunit from the endoplasmic reticulum membrane. Ufmylation of RPL26/uL24 and subsequent 60S ribosome recycling either take place after normal termination of translation or after ribosome stalling during cotranslational translocation at the endoplasmic reticulum. Within the UREL complex, DDRGK1 tethers the complex to the endoplasmic reticulum membrane to restrict its activity to endoplasmic reticulum-docked ribosomes and acts as an ufmylation 'reader': following RPL26/uL24 ufmylation, DDRGK1 specifically binds to ufmylated RPL26/uL24 via its UFIM motif, resulting in stable association between the 60S ribosome and the UREL complex, followed by dissociation of the 60S ribosome subunit from the endoplasmic reticulum membrane. The UREL complex is also involved in reticulophagy in response to endoplasmic reticulum stress by promoting ufmylation of proteins such as CYB5R3 and RPN1, thereby promoting lysosomal degradation of ufmylated proteins. Required for stabilization and ufmylation of ATG9A. This chain is DDRGK domain-containing protein 1, found in Osmerus mordax (Rainbow smelt).